The chain runs to 247 residues: Protein Thf1 (247 aa).

A coiled-coil region spans residues 198–224; the sequence is IAQVRQAMDDILEAQKKRREADQAKKE. Residues 209–247 form a disordered region; sequence LEAQKKRREADQAKKEGSDDTPTTEASTPDSEPTSEVSS. A compositionally biased stretch (basic and acidic residues) spans 210-226; the sequence is EAQKKRREADQAKKEGS. Over residues 228–247 the composition is skewed to polar residues; it reads DTPTTEASTPDSEPTSEVSS.

Belongs to the THF1 family.

Its function is as follows. May be involved in photosynthetic membrane biogenesis. The protein is Protein Thf1 of Acaryochloris marina (strain MBIC 11017).